We begin with the raw amino-acid sequence, 458 residues long: Delta(8)-fatty-acid desaturase (458 aa).

Positions 16-100 constitute a Cytochrome b5 heme-binding domain; that stretch reads KKYITSKELK…LKDYQVSDIS (85 aa). H51 and H74 together coordinate heme. Transmembrane regions (helical) follow at residues 122-142 and 147-167; these read GVIYSLCFVSLLLSACVYGVL and FWIHMLSGAILGLAWMQIAYL. A Histidine box-1 motif is present at residues 169-173; it reads HDAGH. The chain crosses the membrane as a helical span at residues 185-205; it reads FAGIFIGNCITGISIAWWKWT. Residues 206–210 carry the Histidine box-2 motif; sequence HNAHH. 3 helical membrane passes run 264–284, 293–313, and 320–340; these read YYPIMCVARVNLYLQTILLLI, GLNILGTLIFWTWFPLLVSRL, and VAFVLVSFCVTGIQHIQFTLN. The short motif at 383-387 is the Histidine box-3 element; that stretch reads QLEHH.

This sequence belongs to the fatty acid desaturase type 1 family. Fe cation serves as cofactor.

It is found in the membrane. The catalysed reaction is an N-acyl-(4R)-4-hydroxysphinganine + 2 Fe(II)-[cytochrome b5] + O2 + 2 H(+) = a (4R,8E)-4-hydroxysphingenine ceramide + 2 Fe(III)-[cytochrome b5] + 2 H2O. It carries out the reaction an N-acyl-(4R)-4-hydroxysphinganine + 2 Fe(II)-[cytochrome b5] + O2 + 2 H(+) = a (4R,8Z)-4-hydroxysphing-8-enine ceramide + 2 Fe(III)-[cytochrome b5] + 2 H2O. Plays a major role as delta(8)-fatty-acid desaturase which introduces a double bond at the 8-position in the long-chain base (LCB) of ceramides with or without a hydroxy group at the 4-position. The enzyme produces both the 8E and 8Z isomers. This structural modification contributes to the quantitative partitioning of ceramides between the two major sphingolipid classes, glucosylceramides and glycosylinositolphosphoryl ceramides. Sphingolipids are important membrane components involved in environmental stress responses, such as resistance to chilling, and act as cell signaling molecules. In Helianthus annuus (Common sunflower), this protein is Delta(8)-fatty-acid desaturase (sld1).